Here is a 347-residue protein sequence, read N- to C-terminus: N-acetyl-gamma-glutamyl-phosphate reductase (347 aa).

Cysteine 152 is a catalytic residue.

The protein belongs to the NAGSA dehydrogenase family. Type 1 subfamily.

It localises to the cytoplasm. The enzyme catalyses N-acetyl-L-glutamate 5-semialdehyde + phosphate + NADP(+) = N-acetyl-L-glutamyl 5-phosphate + NADPH + H(+). Its pathway is amino-acid biosynthesis; L-arginine biosynthesis; N(2)-acetyl-L-ornithine from L-glutamate: step 3/4. In terms of biological role, catalyzes the NADPH-dependent reduction of N-acetyl-5-glutamyl phosphate to yield N-acetyl-L-glutamate 5-semialdehyde. The sequence is that of N-acetyl-gamma-glutamyl-phosphate reductase from Neisseria meningitidis serogroup C / serotype 2a (strain ATCC 700532 / DSM 15464 / FAM18).